Consider the following 285-residue polypeptide: Polyamine aminopropyltransferase (285 aa).

The region spanning 2 to 237 (EFWFSELHSP…GYWLFGFASK (236 aa)) is the PABS domain. Gln31 contributes to the S-methyl-5'-thioadenosine binding site. Asp86 serves as a coordination point for spermidine. S-methyl-5'-thioadenosine-binding positions include Glu106 and 137–138 (DA). The active-site Proton acceptor is Asp155.

This sequence belongs to the spermidine/spermine synthase family. In terms of assembly, homodimer or homotetramer.

It is found in the cytoplasm. It carries out the reaction S-adenosyl 3-(methylsulfanyl)propylamine + putrescine = S-methyl-5'-thioadenosine + spermidine + H(+). The protein operates within amine and polyamine biosynthesis; spermidine biosynthesis; spermidine from putrescine: step 1/1. Its function is as follows. Catalyzes the irreversible transfer of a propylamine group from the amino donor S-adenosylmethioninamine (decarboxy-AdoMet) to putrescine (1,4-diaminobutane) to yield spermidine. The polypeptide is Polyamine aminopropyltransferase (Lachnospira eligens (strain ATCC 27750 / DSM 3376 / VPI C15-48 / C15-B4) (Eubacterium eligens)).